The primary structure comprises 148 residues: D-aminoacyl-tRNA deacylase (148 aa).

Residues 137–138 (GP) carry the Gly-cisPro motif, important for rejection of L-amino acids motif.

It belongs to the DTD family. In terms of assembly, homodimer.

It is found in the cytoplasm. It catalyses the reaction glycyl-tRNA(Ala) + H2O = tRNA(Ala) + glycine + H(+). The catalysed reaction is a D-aminoacyl-tRNA + H2O = a tRNA + a D-alpha-amino acid + H(+). An aminoacyl-tRNA editing enzyme that deacylates mischarged D-aminoacyl-tRNAs. Also deacylates mischarged glycyl-tRNA(Ala), protecting cells against glycine mischarging by AlaRS. Acts via tRNA-based rather than protein-based catalysis; rejects L-amino acids rather than detecting D-amino acids in the active site. By recycling D-aminoacyl-tRNA to D-amino acids and free tRNA molecules, this enzyme counteracts the toxicity associated with the formation of D-aminoacyl-tRNA entities in vivo and helps enforce protein L-homochirality. In Finegoldia magna (strain ATCC 29328 / DSM 20472 / WAL 2508) (Peptostreptococcus magnus), this protein is D-aminoacyl-tRNA deacylase.